We begin with the raw amino-acid sequence, 111 residues long: uncharacterized protein (111 aa).

4 helical membrane-spanning segments follow: residues 3–23 (WVLV…LKHA), 24–44 (DSLL…ILLI), 54–74 (AAYT…GIVL), and 80–100 (AAQM…KLFT).

It belongs to the drug/metabolite transporter (DMT) superfamily. Small multidrug resistance (SMR) (TC 2.A.7.1) family.

It is found in the cell membrane. This is an uncharacterized protein from Bacillus subtilis (strain 168).